A 211-amino-acid chain; its full sequence is BAG family molecular chaperone regulator 2 (211 aa).

Alanine 2 carries the post-translational modification N-acetylalanine. Phosphoserine is present on residues serine 20, serine 31, and serine 73. The stretch at 20 to 61 (SMADRSSRLLESLDQLELRVEALREAATAVEQEKEILLEMIH) forms a coiled coil. Residues 109 to 189 (SLKHATRIID…NIENSDKAIK (81 aa)) enclose the BAG domain.

Binds to the ATPase domain of HSP/HSC70 chaperones. May interact with NWD1. Interacts with HSPA1A (via NBD), HSPA1B (via NBD) and HSPA8. May interact with DNJC9; the interaction seems to be histone-dependent.

Co-chaperone for HSP70 and HSC70 chaperone proteins. Acts as a nucleotide-exchange factor (NEF) promoting the release of ADP from the HSP70 and HSC70 proteins thereby triggering client/substrate protein release. The sequence is that of BAG family molecular chaperone regulator 2 (BAG2) from Homo sapiens (Human).